We begin with the raw amino-acid sequence, 314 residues long: Atrochrysone carboxyl ACP thioesterase AgnL7 (314 aa).

Zn(2+)-binding residues include H103, H105, D107, and H108. D107 functions as the Proton donor/acceptor in the catalytic mechanism.

It belongs to the metallo-beta-lactamase superfamily. Zn(2+) is required as a cofactor.

The enzyme catalyses atrochrysone carboxyl-[ACP] + H2O = atrochrysone carboxylate + holo-[ACP] + H(+). It functions in the pathway secondary metabolite biosynthesis. Atrochrysone carboxyl ACP thioesterase; part of the gene cluster that mediates the biosynthesis of agnestins, dihydroxy-xanthone metabolites. The pathway begins with the assembly and cyclization of atrochrysone thioester by the non-reducing polyketide synthase Agnpks1. The atrochrysone carboxyl ACP thioesterase AgnL7 then breaks the thioester bond and releases the atrochrysone carboxylic acid as the first enzyme-free intermediate. The decarboxylase AgnL1 then catalyzes the concerted decarboxylation-elimination required to convert atochrysone carboxylic acid into emodin anthrone, which is further oxidized to emodin by the anthrone oxygenase AgnL2. Emodin then undergoes reduction catalyzed by the oxidoreductase AgnL4 to yield the dihydroquinone tautomer which is the substrate for reduction by the short chain dehydrogenase AgnL6 reduction to produce hydroxyketone, followed by AgnL8 dehydration and likely spontaneous autoxidation to chrysophanol. Baeyer-Villiger oxidation by the oxidase AgnL3 leads to monodictyphenone via cleavage of the C-10/C-10a bond of chrysophanol. Alternative cleavage at the C-4a/C-10 bond of chrysophanol also leads to the formation some cephalone F. Further conversion to agnestins A and B, requires reduction to dihydro-monodictyphenone, oxidation to agnestin C probably via an epoxide, and rearrangement to either agnestin A or agnestin B directly, although agnestin A or agnestin B can also interconvert. Within the cluster, AgnR1 is the only unassigned oxidoreductase present which could be involved in this conversion. However, AgnR1 seems not to be involved in this step, and thus genes involved in the proposed oxidation/reduction may be located elsewhere on the genome. Further agnestin A derivatives are probably formed by spontaneous decarboxylations, dehydrations and methanolysis reactions. The polypeptide is Atrochrysone carboxyl ACP thioesterase AgnL7 (Paecilomyces divaricatus (Penicillium divaricatum)).